We begin with the raw amino-acid sequence, 1021 residues long: MAELPTTETPGDATLCSGRFTISTLLSSDEPSPPAAYDSSHPSHLTHSSTFCMRTFGYNTIDVVPTYEHYANSTQPGEPRKVRPTLADLHSFLKQEGRHLHALAFDSRPSHEMTDGLVEGEAGTSSEKNPEEPVRFGWVKGVMIRCMLNIWGVILYLRLPWITAQAGIVLTWIIILLSVTVTSITGLSISAISTNGKVKSGGTYFLISRSLGPELGGSIGLIFAFANAVGVAMHTVGFAETVRDLLQEYGAPIVDPINDIRIIAVVSVTVLLAISLAGMEWESKAQVLFFLVIMVSFANYLVGTLIPPSEDKASKGFFSYRADIFVQNLVPDWRGPDGTFFGMFSIFFPSATGILAGANISGDLKDPAIAIPKGTLMAIFWTTISYLAISATIGSCVVRDASGVLNDTVTPGWGACEGLACSYGWNFTECTQQHSCHYGLINYYQTMSMVSGFAPLITAGIFGATLSSALACLVSAAKVFQCLCEDQLYPLIGFFGKGYGKNKEPVRGYLLAYAIAVAFIIIAELNTIAPIISNFFLCSYALINFSCFHASITNSPGWRPSFQYYNKWAALFGAIISVVIMFLLTWWAALIAIGVVLFLLLYVIYKKPEVNWGSSVQAGSYNLALSYSVGLNEVEDHIKNYRPQCLVLTGPPNFRPALVDFVGTFTRNLSLMICGHVLIGPHKQRMPELQLIANGHTKWLNKRKIKAFYSDVIAEDLRRGVQILMQAAGLGRMKPNILVVGFKKNWQSAHPATVEDYIGILHDAFDFNYGVCVMRMREGLNVSKMMQAHINPVFDPAEDGKEASARVDPKALVKEEQATTIFQSEQGKKTIDIYWLFDDGGLTLLIPYLLGRKRRWSKCKIRVFVGGQINRMDQERKAIISLLSKFRLGFHEVHILPDINQNPRAEHTKRFEDMIAPFRLNDGFKDEATVNEMRRDCPWKISDEEITKNRVKSLRQVRLNEIVLDYSRDAALIVITLPIGRKGKCPSSLYMAWLETLSQDLRPPVILIRGNQENVLTFYCQ.

At 1–137 (MAELPTTETP…KNPEEPVRFG (137 aa)) the chain is on the cytoplasmic side. Serine 43 bears the Phosphoserine mark. Phosphothreonine; by OXSR1 and STK39 is present on threonine 46. Residue serine 49 is modified to Phosphoserine. Phosphothreonine is present on threonine 50. Phosphothreonine; by OXSR1 and STK39 is present on residues threonine 55 and threonine 60. Serine 73 bears the Phosphoserine mark. Phosphoserine; by OXSR1 and STK39 is present on serine 91. Threonine 124 is subject to Phosphothreonine. Serine 126 bears the Phosphoserine mark. Residues 138 to 167 (WVKGVMIRCMLNIWGVILYLRLPWITAQAG) form a discontinuously helical membrane-spanning segment. Leucine 148 provides a ligand contact to Na(+). Asparagine 149 serves as a coordination point for polythiazide. A Na(+)-binding site is contributed by tryptophan 151. The helical transmembrane segment at 168–189 (IVLTWIIILLSVTVTSITGLSI) threads the bilayer. The Cytoplasmic segment spans residues 190 to 220 (SAISTNGKVKSGGTYFLISRSLGPELGGSIG). The helical transmembrane segment at 221 to 243 (LIFAFANAVGVAMHTVGFAETVR) threads the bilayer. Asparagine 227 and histidine 234 together coordinate polythiazide. Topologically, residues 244 to 255 (DLLQEYGAPIVD) are extracellular. A run of 2 helical transmembrane segments spans residues 256–280 (PIND…AGME) and 281–303 (WESK…YLVG). The Extracellular segment spans residues 304–338 (TLIPPSEDKASKGFFSYRADIFVQNLVPDWRGPDG). A discontinuously helical membrane pass occupies residues 339 to 360 (TFFGMFSIFFPSATGILAGANI). Position 352 (threonine 352) interacts with polythiazide. Chloride contacts are provided by glycine 353, isoleucine 354, and leucine 355. Position 359 (asparagine 359) interacts with polythiazide. The Cytoplasmic segment spans residues 361–371 (SGDLKDPAIAI). Residues 372–393 (PKGTLMAIFWTTISYLAISATI) traverse the membrane as a helical segment. At 394–453 (GSCVVRDASGVLNDTVTPGWGACEGLACSYGWNFTECTQQHSCHYGLINYYQTMSMVSGF) the chain is on the extracellular side. Residue asparagine 406 is glycosylated (N-linked (GlcNAc...) asparagine). An intrachain disulfide couples cysteine 416 to cysteine 421. The N-linked (GlcNAc...) asparagine glycan is linked to asparagine 426. The cysteines at positions 430 and 436 are disulfide-linked. The chain crosses the membrane as a helical span at residues 454–477 (APLITAGIFGATLSSALACLVSAA). Na(+) contacts are provided by alanine 464, serine 467, and serine 468. Residues 478 to 507 (KVFQCLCEDQLYPLIGFFGKGYGKNKEPVR) are Cytoplasmic-facing. A helical membrane pass occupies residues 508-522 (GYLLAYAIAVAFIII). At 523–527 (AELNT) the chain is on the extracellular side. Residues 528–544 (IAPIISNFFLCSYALIN) form a helical membrane-spanning segment. Chloride is bound at residue tyrosine 540. Over 545–567 (FSCFHASITNSPGWRPSFQYYNK) the chain is Cytoplasmic. The next 2 helical transmembrane spans lie at 568 to 587 (WAAL…LTWW) and 588 to 599 (AALIAIGVVLFL). Topologically, residues 600–1021 (LLYVIYKKPE…QENVLTFYCQ (422 aa)) are cytoplasmic. The tract at residues 615-630 (SVQAGSYNLALSYSVG) is scissor helix. ATP is bound by residues leucine 648, arginine 655, valine 677, glycine 741, leucine 780, and asparagine 781.

It belongs to the SLC12A transporter family. Homodimer; adopts a domain-swap conformation at the scissor helices connecting the transmembrane domain and C-terminal domain. Interacts with KLHL3. Interacts with IL18R1; this interaction is increased by IL18 treatment. Post-translationally, ubiquitinated; ubiquitination is essential for regulation of endocytosis. The BCR(KLHL3) complex was initially identified as a candidate ubiquitin ligase for SLC12A3. However, it was later shown that it is not the case. Phosphorylated at Thr-46, Thr-55, Thr-60 and Ser-91 by OXSR1/OSR1 and STK39/SPAK downstream of WNK4, promoting its activity. Phosphorylated in response to IL18. In terms of tissue distribution, predominantly expressed in the kidney (at protein level). Localizes to the distal convoluted tubules (at protein level). Not detected in normal aorta, but abundantly expressed in fatty streaks and advanced atherosclerotic lesions (at protein level).

It is found in the cell membrane. The protein localises to the apical cell membrane. It catalyses the reaction chloride(out) + Na(+)(out) = chloride(in) + Na(+)(in). Phosphorylation by OXSR1/OSR1 and STK39/SPAK in kidney distal convoluted tubules downstream of WNK4 promotes its activity. Also activated by OXSR1/OSR1 and STK39/SPAK downstream of WNK3. Target of thiazide diuretics used in the treatment of high blood pressure. Thiazide drugs, such as polythiazide, specifically inhibit SLC12A3/NCC transporter activity by competing with chloride for binding and by locking SLC12A3/NCC in an outward-facing conformation. In terms of biological role, electroneutral sodium and chloride ion cotransporter, which acts as a key mediator of sodium and chloride reabsorption in kidney distal convoluted tubules. Also acts as a receptor for the pro-inflammatory cytokine IL18, thereby contributing to IL18-induced cytokine production, including IFNG, IL6, IL18 and CCL2. May act either independently of IL18R1, or in a complex with IL18R1. The protein is Solute carrier family 12 member 3 of Homo sapiens (Human).